The following is a 327-amino-acid chain: Phenylalanine--tRNA ligase alpha subunit (327 aa).

E252 provides a ligand contact to Mg(2+).

This sequence belongs to the class-II aminoacyl-tRNA synthetase family. Phe-tRNA synthetase alpha subunit type 1 subfamily. In terms of assembly, tetramer of two alpha and two beta subunits. It depends on Mg(2+) as a cofactor.

The protein localises to the cytoplasm. The enzyme catalyses tRNA(Phe) + L-phenylalanine + ATP = L-phenylalanyl-tRNA(Phe) + AMP + diphosphate + H(+). In Shewanella frigidimarina (strain NCIMB 400), this protein is Phenylalanine--tRNA ligase alpha subunit.